The sequence spans 311 residues: Malate dehydrogenase (311 aa).

Residues 7-13 (GAAGGIG) and D34 each bind NAD(+). Positions 81 and 87 each coordinate substrate. NAD(+) contacts are provided by residues N94 and 117-119 (ITN). Substrate-binding residues include N119 and R153. H177 (proton acceptor) is an active-site residue. M227 lines the NAD(+) pocket.

The protein belongs to the LDH/MDH superfamily. MDH type 1 family. As to quaternary structure, homodimer.

The enzyme catalyses (S)-malate + NAD(+) = oxaloacetate + NADH + H(+). Functionally, catalyzes the reversible oxidation of malate to oxaloacetate. This chain is Malate dehydrogenase (mdh), found in Vibrio cholerae serotype O1 (strain ATCC 39315 / El Tor Inaba N16961).